The primary structure comprises 402 residues: Multidrug resistance protein MdtH (402 aa).

At 1-12 the chain is on the cytoplasmic side; that stretch reads MSRVSQARNLGK. A helical membrane pass occupies residues 13 to 33; sequence YFLLIDNMLVVLGFFVVFPLI. Topologically, residues 34-98 are periplasmic; that stretch reads SIRFVDQMGW…GFATMGIAHE (65 aa). Residues 99–116 traverse the membrane as a helical segment; it reads PWLLWFSCLLSGLGGTLF. Residues 117-138 are Cytoplasmic-facing; sequence DPPRSALVVKLIRPQQRGRFFS. A helical membrane pass occupies residues 139–159; the sequence is LLMMQDSASAVIGALLGSWLL. The Periplasmic segment spans residues 160–164; it reads QYDFR. Residues 165–185 traverse the membrane as a helical segment; it reads LVCATGAVLFVLCAAFNAWLL. Over 186-213 the chain is Cytoplasmic; the sequence is PAWKLSTVRTPVREGMTRVMRDKRFVTY. Residues 214–234 traverse the membrane as a helical segment; sequence VLTLAGYYMLAVQVMLMLPIM. At 235 to 243 the chain is on the periplasmic side; that stretch reads VNDVAGAPS. A helical transmembrane segment spans residues 244–264; the sequence is AVKWMYAIEACLSLTLLYPIA. At 265–276 the chain is on the cytoplasmic side; it reads RWSEKHFRLEHR. A helical transmembrane segment spans residues 277 to 297; the sequence is LMAGLLIMSLSMMPVGMVSGL. Residues 298 to 299 lie on the Periplasmic side of the membrane; it reads QQ. The chain crosses the membrane as a helical span at residues 300–320; sequence LFTLICLFYIGSIIAEPARET. Residues 321 to 339 are Cytoplasmic-facing; sequence LSASLADARARGSYMGFSR. A helical transmembrane segment spans residues 340-360; it reads LGLAIGGAIGYIGGGWLFDLG. At 361–367 the chain is on the periplasmic side; sequence KSAHQPE. The helical transmembrane segment at 368–388 threads the bilayer; it reads LPWMMLGIIGIFTFLALGWQF. The Cytoplasmic segment spans residues 389–402; the sequence is SQKRAARRLLERDA.

Belongs to the major facilitator superfamily. DHA1 family. MdtH (TC 2.A.1.2.21) subfamily.

It localises to the cell inner membrane. The chain is Multidrug resistance protein MdtH from Shigella flexneri.